A 450-amino-acid polypeptide reads, in one-letter code: 23S rRNA (uracil(1939)-C(5))-methyltransferase RlmD (450 aa).

Residues 12–70 (SKQLSAKLSLSVNQLDHLGAGIAQHQGKVVFIPGALPDETVTVQLTEQKKNYARAKLIK) form the TRAM domain. The [4Fe-4S] cluster site is built by Cys-83, Cys-89, Cys-92, and Cys-171. S-adenosyl-L-methionine is bound by residues Gln-283, Phe-312, Asn-317, Glu-333, Asp-360, and Asp-380. The Nucleophile role is filled by Cys-406.

Belongs to the class I-like SAM-binding methyltransferase superfamily. RNA M5U methyltransferase family. RlmD subfamily.

The enzyme catalyses uridine(1939) in 23S rRNA + S-adenosyl-L-methionine = 5-methyluridine(1939) in 23S rRNA + S-adenosyl-L-homocysteine + H(+). Catalyzes the formation of 5-methyl-uridine at position 1939 (m5U1939) in 23S rRNA. The protein is 23S rRNA (uracil(1939)-C(5))-methyltransferase RlmD of Shewanella baltica (strain OS195).